The primary structure comprises 277 residues: Transcription factor WRKY19 (277 aa).

The segment at residues 100-168 is a DNA-binding region (WRKY); it reads QDTASLDDGL…YLGDHTCGQA (69 aa).

It belongs to the WRKY group III family.

It localises to the nucleus. Its function is as follows. May play a role in defense responses. The polypeptide is Transcription factor WRKY19 (Oryza sativa subsp. japonica (Rice)).